We begin with the raw amino-acid sequence, 159 residues long: 2-C-methyl-D-erythritol 2,4-cyclodiphosphate synthase (159 aa).

A divalent metal cation contacts are provided by D8 and H10. 4-CDP-2-C-methyl-D-erythritol 2-phosphate contacts are provided by residues 8-10 (DVH) and 34-35 (HS). H42 provides a ligand contact to a divalent metal cation. 4-CDP-2-C-methyl-D-erythritol 2-phosphate is bound by residues 56–58 (DIG), 132–135 (TTTE), and R142.

This sequence belongs to the IspF family. Homotrimer. A divalent metal cation serves as cofactor.

It carries out the reaction 4-CDP-2-C-methyl-D-erythritol 2-phosphate = 2-C-methyl-D-erythritol 2,4-cyclic diphosphate + CMP. It participates in isoprenoid biosynthesis; isopentenyl diphosphate biosynthesis via DXP pathway; isopentenyl diphosphate from 1-deoxy-D-xylulose 5-phosphate: step 4/6. Involved in the biosynthesis of isopentenyl diphosphate (IPP) and dimethylallyl diphosphate (DMAPP), two major building blocks of isoprenoid compounds. Catalyzes the conversion of 4-diphosphocytidyl-2-C-methyl-D-erythritol 2-phosphate (CDP-ME2P) to 2-C-methyl-D-erythritol 2,4-cyclodiphosphate (ME-CPP) with a corresponding release of cytidine 5-monophosphate (CMP). The chain is 2-C-methyl-D-erythritol 2,4-cyclodiphosphate synthase from Chlorobium phaeobacteroides (strain BS1).